We begin with the raw amino-acid sequence, 956 residues long: Outer capsid protein VP2 (956 aa).

It belongs to the orbivirus VP2 family.

Its subcellular location is the virion. Its function is as follows. The VP2 protein is one of the two proteins (with VP5) which constitute the virus particle outer capsid. It is the major target of the host immunogenic response. Responsible for viral attachment to target host cell, probably by binding to sialic acid. This attachment induces virion internalization predominantly through clathrin-dependent endocytosis. The polypeptide is Outer capsid protein VP2 (Segment-2) (Bluetongue virus 10 (isolate USA) (BTV 10)).